A 340-amino-acid chain; its full sequence is Phospho-N-acetylmuramoyl-pentapeptide-transferase (340 aa).

10 consecutive transmembrane segments (helical) span residues 3–23 (MSLIAGVAAFVLTVLAMPHFI), 53–73 (GGTVFLVVAILISLIFNFHVF), 79–99 (AYGATAGILFVILIYGIIGFL), 119–139 (MALQIVAGLLFYFIHVLPSGT), 144–164 (IGGLTIQLGVFYVLFVLFWIV), 176–196 (IDGLASVSVVISLIAYGIIAF), 200–220 (ELAILTIIITMIGALLGFFVF), 227–247 (VFMGDVGSLSLGAMLAVISIA), 250–270 (VEWTLLLIGVVYVLETASVML), and 315–335 (VDAFLWTIGALASSITLWMVL).

The protein belongs to the glycosyltransferase 4 family. MraY subfamily. It depends on Mg(2+) as a cofactor.

It is found in the cell membrane. It carries out the reaction UDP-N-acetyl-alpha-D-muramoyl-L-alanyl-gamma-D-glutamyl-L-lysyl-D-alanyl-D-alanine + di-trans,octa-cis-undecaprenyl phosphate = Mur2Ac(oyl-L-Ala-gamma-D-Glu-L-Lys-D-Ala-D-Ala)-di-trans,octa-cis-undecaprenyl diphosphate + UMP. It functions in the pathway cell wall biogenesis; peptidoglycan biosynthesis. In terms of biological role, catalyzes the initial step of the lipid cycle reactions in the biosynthesis of the cell wall peptidoglycan: transfers peptidoglycan precursor phospho-MurNAc-pentapeptide from UDP-MurNAc-pentapeptide onto the lipid carrier undecaprenyl phosphate, yielding undecaprenyl-pyrophosphoryl-MurNAc-pentapeptide, known as lipid I. The protein is Phospho-N-acetylmuramoyl-pentapeptide-transferase of Streptococcus thermophilus (strain ATCC BAA-250 / LMG 18311).